Consider the following 207-residue polypeptide: Guanylate kinase (207 aa).

In terms of domain architecture, Guanylate kinase-like spans 5-184 (GNLFIVSAPS…ALADLKSIIF (180 aa)). 12–19 (APSGAGKS) contributes to the ATP binding site.

The protein belongs to the guanylate kinase family.

The protein localises to the cytoplasm. The catalysed reaction is GMP + ATP = GDP + ADP. Functionally, essential for recycling GMP and indirectly, cGMP. In Shewanella denitrificans (strain OS217 / ATCC BAA-1090 / DSM 15013), this protein is Guanylate kinase.